The sequence spans 246 residues: PF03932 family protein CutC (246 aa).

The protein belongs to the CutC family.

The protein localises to the cytoplasm. The chain is PF03932 family protein CutC from Treponema denticola (strain ATCC 35405 / DSM 14222 / CIP 103919 / JCM 8153 / KCTC 15104).